The following is a 524-amino-acid chain: Tubulin-specific chaperone E (524 aa).

Residue Ser-2 is modified to N-acetylserine. The CAP-Gly domain occupies Gly-27–Arg-71. 7 LRR repeats span residues Asn-154 to Ala-175, Asp-180 to Thr-201, Thr-206 to Pro-227, Val-231 to Gln-253, Asn-254 to Leu-273, Arg-279 to Ile-300, and Ala-309 to Asp-330. Positions Asn-343 to Asp-381 constitute an LRRCT domain. The residue at position 460 (Lys-460) is an N6-acetyllysine. Ser-492 bears the Phosphoserine mark.

It belongs to the TBCE family. As to quaternary structure, supercomplex made of cofactors A to E. Cofactors A and D function by capturing and stabilizing tubulin in a quasi-native conformation. Cofactor E binds to the cofactor D-tubulin complex; interaction with cofactor C then causes the release of tubulin polypeptides that are committed to the native state. Cofactors B and E can form a heterodimer which binds to alpha-tubulin and enhances their ability to dissociate tubulin heterodimers. Interacts with TBCD.

Its subcellular location is the cytoplasm. The protein resides in the cytoskeleton. Its function is as follows. Tubulin-folding protein; involved in the second step of the tubulin folding pathway and in the regulation of tubulin heterodimer dissociation. Required for correct organization of microtubule cytoskeleton and mitotic splindle, and maintenance of the neuronal microtubule network. The sequence is that of Tubulin-specific chaperone E (Tbce) from Rattus norvegicus (Rat).